The sequence spans 335 residues: Beta-hexosaminidase (335 aa).

Substrate contacts are provided by residues Asp60, Arg68, Arg133, and 163-164 (KH). Residue His176 is the Proton donor/acceptor of the active site. Asp247 (nucleophile) is an active-site residue.

The protein belongs to the glycosyl hydrolase 3 family. NagZ subfamily. Monomer.

It is found in the cytoplasm. The enzyme catalyses Hydrolysis of terminal non-reducing N-acetyl-D-hexosamine residues in N-acetyl-beta-D-hexosaminides.. It functions in the pathway cell wall biogenesis; peptidoglycan recycling. Functionally, plays a role in peptidoglycan recycling by cleaving the terminal beta-1,4-linked N-acetylglucosamine (GlcNAc) from peptide-linked peptidoglycan fragments, giving rise to free GlcNAc, anhydro-N-acetylmuramic acid and anhydro-N-acetylmuramic acid-linked peptides. This is Beta-hexosaminidase from Xylella fastidiosa (strain 9a5c).